The primary structure comprises 371 residues: MNYSHDNWSAILAHIGKPEELDTSARNAGALTRRREIRDAATLLRLGLAYGPGGMSSLREVTAWAQLHDVATLSDVALLKRLRNAADWFGILAAQTLAVRAAVTGCTSGKRLRLVDGTAISAPGGGSAEWRLHMGYDPHTCQFTDFELTDSRDAERLDRFAQTADEIRIADRGFGSRPECIRSLAFGEADYIVRVHWRGLRWLTAEGMRFDMMGFLRGLDCGKNGETTVMIGNSGNKKAGAPFPARLIAVSLPPEKALISKTRLLSENRRKGRVVQAETLEAAGHVLLLTSLPEDEYSAEQVADCYRLRWQIELAFKRLKSLLHLDALRAKEPELAKAWIFANLLAAFLIDDIIQPSLDFPPRSAGSEKKN.

It belongs to the transposase 11 family.

Its function is as follows. Involved in the transposition of the insertion sequence IS421. This chain is Transposase for insertion sequence element IS421, found in Escherichia coli.